A 140-amino-acid polypeptide reads, in one-letter code: Protein BIC1 (140 aa).

Over residues 1–10 (MMNIDDTTSP) the composition is skewed to polar residues. Residues 1–71 (MMNIDDTTSP…RVDTGRERLK (71 aa)) form a disordered region. Over residues 42 to 68 (ADKKDLALLEEKPKQSQEEDRVDTGRE) the composition is skewed to basic and acidic residues.

As to quaternary structure, interacts with CRY2 in both darkness and light.

The protein localises to the nucleus. Its function is as follows. Regulates the blue-light dependent dimerization of CRY2 and formation of photobodies. Interacts with photoexited CRY2 to inhibit its activity. Inhibits CRY phosphorylation. In Arabidopsis thaliana (Mouse-ear cress), this protein is Protein BIC1.